The chain runs to 187 residues: UPF0301 protein YqgE (187 aa).

It belongs to the UPF0301 (AlgH) family.

This Salmonella heidelberg (strain SL476) protein is UPF0301 protein YqgE.